The primary structure comprises 204 residues: MLASIEEAVNDFRDGKFLIVLDDETRENEGDLIIAGCKVTTEQMAFLVRHSSGYVCVPMTGERLDSLEIPMMVDNNEDRMRTAYAVTLDYANGTTTGISAHDRALTTRQLANPEVTSPREFNRPGHIVPLRARDGGVLERDGHTEAAVDLCKLAGLPPVGAICELVREEDGLMSRFDDCISFGKKWGIKVITIESLKSYIKGRM.

Glu-27 provides a ligand contact to Mg(2+). Asp-31 provides a ligand contact to D-ribulose 5-phosphate. Cys-56 carries the post-translational modification S-glutathionyl cysteine. D-ribulose 5-phosphate contacts are provided by residues Thr-82 and 140–144 (RDGHT). A Mg(2+)-binding site is contributed by His-143.

It belongs to the DHBP synthase family. In terms of assembly, homodimer. Requires Mg(2+) as cofactor. It depends on Mn(2+) as a cofactor. In terms of processing, S-glutathionylation is reversible and dependent on a glutaredoxin.

It catalyses the reaction D-ribulose 5-phosphate = (2S)-2-hydroxy-3-oxobutyl phosphate + formate + H(+). It functions in the pathway cofactor biosynthesis; riboflavin biosynthesis; 2-hydroxy-3-oxobutyl phosphate from D-ribulose 5-phosphate: step 1/1. Catalyzes the conversion of D-ribulose 5-phosphate to formate and 3,4-dihydroxy-2-butanone 4-phosphate. In Schizosaccharomyces pombe (strain 972 / ATCC 24843) (Fission yeast), this protein is 3,4-dihydroxy-2-butanone 4-phosphate synthase.